Here is a 97-residue protein sequence, read N- to C-terminus: Co-chaperonin GroES (97 aa).

Belongs to the GroES chaperonin family. As to quaternary structure, heptamer of 7 subunits arranged in a ring. Interacts with the chaperonin GroEL.

Its subcellular location is the cytoplasm. In terms of biological role, together with the chaperonin GroEL, plays an essential role in assisting protein folding. The GroEL-GroES system forms a nano-cage that allows encapsulation of the non-native substrate proteins and provides a physical environment optimized to promote and accelerate protein folding. GroES binds to the apical surface of the GroEL ring, thereby capping the opening of the GroEL channel. The protein is Co-chaperonin GroES of Edwardsiella ictaluri (strain 93-146).